Consider the following 308-residue polypeptide: Ribosomal RNA small subunit methyltransferase H (308 aa).

S-adenosyl-L-methionine-binding positions include 33-35 (GGH), Asp52, Phe78, Asp99, and Gln106. The segment at 289-308 (EEIETNSRSRSAKLRVAEKL) is disordered.

Belongs to the methyltransferase superfamily. RsmH family.

It is found in the cytoplasm. It catalyses the reaction cytidine(1402) in 16S rRNA + S-adenosyl-L-methionine = N(4)-methylcytidine(1402) in 16S rRNA + S-adenosyl-L-homocysteine + H(+). In terms of biological role, specifically methylates the N4 position of cytidine in position 1402 (C1402) of 16S rRNA. The protein is Ribosomal RNA small subunit methyltransferase H of Thermoanaerobacter sp. (strain X514).